The sequence spans 224 residues: Peroxiredoxin-like 2A (224 aa).

The segment at 14 to 112 is thioredoxin fold; it reads MWSVGLGAVG…SKLGVPLYAV (99 aa). Position 85 (U85) is a non-standard amino acid, selenocysteine. C88 (redox-active) is an active-site residue.

This sequence belongs to the peroxiredoxin-like PRXL2 family. PRXL2A subfamily.

The protein resides in the cytoplasm. Involved in redox regulation of the cell. Acts as an antioxidant. Inhibits TNFSF11-induced NFKB1 and JUN activation and osteoclast differentiation. May affect bone resorption and help to maintain bone mass. In Gallus gallus (Chicken), this protein is Peroxiredoxin-like 2A (PRXL2A).